Here is a 311-residue protein sequence, read N- to C-terminus: Pyrimidine-specific ribonucleoside hydrolase RihA (311 aa).

Histidine 240 is a catalytic residue.

The protein belongs to the IUNH family. RihA subfamily.

Hydrolyzes with equal efficiency cytidine or uridine to ribose and cytosine or uracil, respectively. The polypeptide is Pyrimidine-specific ribonucleoside hydrolase RihA (Escherichia coli O127:H6 (strain E2348/69 / EPEC)).